The primary structure comprises 148 residues: 3-dehydroquinate dehydratase (148 aa).

The active-site Proton acceptor is Tyr-23. 3 residues coordinate substrate: Asn-75, His-81, and Asp-88. The active-site Proton donor is His-101. Residues 102–103 (LS) and Arg-112 each bind substrate.

This sequence belongs to the type-II 3-dehydroquinase family. Homododecamer.

The catalysed reaction is 3-dehydroquinate = 3-dehydroshikimate + H2O. It functions in the pathway metabolic intermediate biosynthesis; chorismate biosynthesis; chorismate from D-erythrose 4-phosphate and phosphoenolpyruvate: step 3/7. Functionally, catalyzes a trans-dehydration via an enolate intermediate. In Xanthomonas oryzae pv. oryzae (strain MAFF 311018), this protein is 3-dehydroquinate dehydratase.